Consider the following 367-residue polypeptide: tRNA-specific 2-thiouridylase MnmA (367 aa).

Residues 6–13 (AMSGGVDS) and Met-32 contribute to the ATP site. The active-site Nucleophile is the Cys-101. A disulfide bond links Cys-101 and Cys-193. Gly-125 is a binding site for ATP. The tract at residues 143 to 145 (KDQ) is interaction with tRNA. Cys-193 functions as the Cysteine persulfide intermediate in the catalytic mechanism.

It belongs to the MnmA/TRMU family.

It localises to the cytoplasm. The enzyme catalyses S-sulfanyl-L-cysteinyl-[protein] + uridine(34) in tRNA + AH2 + ATP = 2-thiouridine(34) in tRNA + L-cysteinyl-[protein] + A + AMP + diphosphate + H(+). Catalyzes the 2-thiolation of uridine at the wobble position (U34) of tRNA, leading to the formation of s(2)U34. This chain is tRNA-specific 2-thiouridylase MnmA, found in Mycobacterium tuberculosis (strain CDC 1551 / Oshkosh).